We begin with the raw amino-acid sequence, 485 residues long: Serine hydroxymethyltransferase, mitochondrial (485 aa).

Position 259 is an N6-(pyridoxal phosphate)lysine (Lys259).

This sequence belongs to the SHMT family. As to quaternary structure, homotetramer. Pyridoxal 5'-phosphate is required as a cofactor.

Its subcellular location is the mitochondrion. It carries out the reaction (6R)-5,10-methylene-5,6,7,8-tetrahydrofolate + glycine + H2O = (6S)-5,6,7,8-tetrahydrofolate + L-serine. It participates in one-carbon metabolism; tetrahydrofolate interconversion. Interconversion of serine and glycine. This is Serine hydroxymethyltransferase, mitochondrial (SHM1) from Candida glabrata (strain ATCC 2001 / BCRC 20586 / JCM 3761 / NBRC 0622 / NRRL Y-65 / CBS 138) (Yeast).